The sequence spans 1345 residues: CRISPR-associated endonuclease Cas9 (1345 aa).

Catalysis depends on D10, which acts as the For RuvC-like nuclease domain. Mg(2+) is bound by residues D10, E762, and E766. Residues 770 to 921 (TNQGRRNSQQ…DKAGFIKRQL (152 aa)) enclose the HNH Cas9-type domain. Catalysis depends on H840, which acts as the Proton acceptor for HNH nuclease domain. Position 983 (H983) interacts with Mg(2+).

Belongs to the CRISPR-associated protein Cas9 family. Subtype II-A subfamily. In terms of assembly, monomer. Binds crRNA and tracrRNA. Requires Mg(2+) as cofactor.

Its function is as follows. CRISPR (clustered regularly interspaced short palindromic repeat) is an adaptive immune system that provides protection against mobile genetic elements (viruses, transposable elements and conjugative plasmids). CRISPR clusters contain spacers, sequences complementary to antecedent mobile elements, and target invading nucleic acids. CRISPR clusters are transcribed and processed into CRISPR RNA (crRNA). In type II CRISPR systems correct processing of pre-crRNA requires a trans-encoded small RNA (tracrRNA), endogenous ribonuclease 3 (rnc) and this protein. The tracrRNA serves as a guide for ribonuclease 3-aided processing of pre-crRNA. Subsequently Cas9/crRNA/tracrRNA endonucleolytically cleaves linear or circular dsDNA target complementary to the spacer; Cas9 is inactive in the absence of the 2 guide RNAs (gRNA). Cas9 recognizes the protospacer adjacent motif (PAM) in the CRISPR repeat sequences to help distinguish self versus nonself, as targets within the bacterial CRISPR locus do not have PAMs. PAM recognition is also required for catalytic activity. Complements the gRNA coprocessing defect in a cas9 deletion in S.pyogenes strain 370 and cuts target plasmid in Cas9:gRNAs mixing experiments with S.thermophilus CRISPR3 from strain LMD-9. This Streptococcus mutans serotype c (strain ATCC 700610 / UA159) protein is CRISPR-associated endonuclease Cas9.